The chain runs to 543 residues: CTP synthase (543 aa).

Residues 1 to 265 (MTRYIFVTGG…DDFVVERFGL (265 aa)) are amidoligase domain. Ser-13 contributes to the CTP binding site. Ser-13 lines the UTP pocket. ATP contacts are provided by residues 14-19 (SLGKGI) and Asp-71. Positions 71 and 139 each coordinate Mg(2+). CTP is bound by residues 146–148 (DIE), 186–191 (KTKPTQ), and Lys-222. Residues 186–191 (KTKPTQ) and Lys-222 contribute to the UTP site. The Glutamine amidotransferase type-1 domain maps to 290 to 541 (TIAMVGKYME…VNAALAQKAK (252 aa)). Gly-351 lines the L-glutamine pocket. Cys-378 serves as the catalytic Nucleophile; for glutamine hydrolysis. Residues 379–382 (LGMQ), Glu-402, and Arg-469 each bind L-glutamine. Catalysis depends on residues His-514 and Glu-516.

The protein belongs to the CTP synthase family. In terms of assembly, homotetramer.

It catalyses the reaction UTP + L-glutamine + ATP + H2O = CTP + L-glutamate + ADP + phosphate + 2 H(+). The catalysed reaction is L-glutamine + H2O = L-glutamate + NH4(+). It carries out the reaction UTP + NH4(+) + ATP = CTP + ADP + phosphate + 2 H(+). It participates in pyrimidine metabolism; CTP biosynthesis via de novo pathway; CTP from UDP: step 2/2. Its activity is regulated as follows. Allosterically activated by GTP, when glutamine is the substrate; GTP has no effect on the reaction when ammonia is the substrate. The allosteric effector GTP functions by stabilizing the protein conformation that binds the tetrahedral intermediate(s) formed during glutamine hydrolysis. Inhibited by the product CTP, via allosteric rather than competitive inhibition. Its function is as follows. Catalyzes the ATP-dependent amination of UTP to CTP with either L-glutamine or ammonia as the source of nitrogen. Regulates intracellular CTP levels through interactions with the four ribonucleotide triphosphates. This Ectopseudomonas mendocina (strain ymp) (Pseudomonas mendocina) protein is CTP synthase.